The primary structure comprises 70 residues: U2-agatoxin-Ao1b (70 aa).

The N-terminal stretch at 1 to 20 (MRAIISLILISAMVFSMIAA) is a signal peptide. The propeptide occupies 21–34 (VPEEEGLQLSEDER). 3 disulfides stabilise this stretch: Cys-37-Cys-53, Cys-44-Cys-58, and Cys-52-Cys-68. Position 69 is a leucine amide (Leu-69).

Belongs to the neurotoxin 01 (U2-agtx) family. Expressed by the venom gland.

It localises to the secreted. Insect active toxin causing rapid but reversible paralysis in crickets. No activity shown in mammals. Does not show effect on mammalian voltage-gated calcium channels. The chain is U2-agatoxin-Ao1b from Agelena orientalis (Funnel-web spider).